The sequence spans 297 residues: Ribosomal RNA small subunit methyltransferase H (297 aa).

S-adenosyl-L-methionine is bound by residues 30–32 (GGY), Asp48, Phe75, Asp96, and Gln103.

The protein belongs to the methyltransferase superfamily. RsmH family.

It localises to the cytoplasm. The enzyme catalyses cytidine(1402) in 16S rRNA + S-adenosyl-L-methionine = N(4)-methylcytidine(1402) in 16S rRNA + S-adenosyl-L-homocysteine + H(+). Functionally, specifically methylates the N4 position of cytidine in position 1402 (C1402) of 16S rRNA. This Ehrlichia chaffeensis (strain ATCC CRL-10679 / Arkansas) protein is Ribosomal RNA small subunit methyltransferase H.